The following is a 629-amino-acid chain: tRNA uridine 5-carboxymethylaminomethyl modification enzyme MnmG (629 aa).

FAD is bound by residues Gly-13–Gly-18, Val-125, and Ser-180. An NAD(+)-binding site is contributed by Gly-273–Phe-287. Gln-370 contributes to the FAD binding site.

The protein belongs to the MnmG family. In terms of assembly, homodimer. Heterotetramer of two MnmE and two MnmG subunits. Requires FAD as cofactor.

The protein resides in the cytoplasm. In terms of biological role, NAD-binding protein involved in the addition of a carboxymethylaminomethyl (cmnm) group at the wobble position (U34) of certain tRNAs, forming tRNA-cmnm(5)s(2)U34. This chain is tRNA uridine 5-carboxymethylaminomethyl modification enzyme MnmG, found in Shewanella sp. (strain ANA-3).